A 123-amino-acid polypeptide reads, in one-letter code: Protein TraJ (123 aa).

Monomer.

It is found in the cytoplasm. Functionally, transfer of plasmid RP4 during bacterial conjugation requires the plasmid-encoded TraJ protein, which binds to a 19-base pair invert sequence repetition within the transfer origin. TraJ protein is bound to only one side of the DNA helix. This nucleoprotein structure is the initial complex in the pathway to assemble a functional relaxosome. In Escherichia coli, this protein is Protein TraJ (traJ).